The primary structure comprises 757 residues: Chloride anion exchanger (757 aa).

Topologically, residues 1–71 (MIEAIGNQYV…SWLPAYKIKE (71 aa)) are cytoplasmic. Residues 72–92 (WLLSDIVSGISTGLVAVLQGL) form a helical membrane-spanning segment. Position 93 (Ala-93) is a topological domain, extracellular. Residues 94-114 (FALLVNIPPAYGLYAAFFPVI) traverse the membrane as a helical segment. The Cytoplasmic segment spans residues 115–124 (TYFFLGTSRH). A helical membrane pass occupies residues 125-145 (ISVGPFPVLSMMVGVVVTRVA). The Extracellular segment spans residues 146-176 (SGSDTSPALSSSSAENDSMIEEKVMVAASVT). Asn-161 carries N-linked (GlcNAc...) asparagine glycosylation. A helical transmembrane segment spans residues 177 to 197 (VLSGIIQLLLGVLQIGFVVIY). Over 198-201 (LSES) the chain is Cytoplasmic. A helical transmembrane segment spans residues 202–222 (LISGFTTAAAIHVLVSQLKFM). Over 223-250 (LQLTVPAHSDPFSIFKVLESVFSQIQKT) the chain is Extracellular. Residues 251 to 271 (NIADLVTSVIILVVVFVVKEI) traverse the membrane as a helical segment. Residues 272–278 (NQRYRSK) lie on the Cytoplasmic side of the membrane. Residues 279-299 (LPVPIPIELIMTVIATGISYG) form a helical membrane-spanning segment. Residues 300 to 335 (CNFEQRFGVAVVGNMSLGFQPPITPSVEVFQDTIGD) lie on the Extracellular side of the membrane. Residues 336–356 (CFGIAIVGFAVAFSVASVYSL) form a helical membrane-spanning segment. Residues 357–367 (KYDYPIDGNQE) are Cytoplasmic-facing. The chain crosses the membrane as a helical span at residues 368 to 388 (LIALGVSNIFTGAFKGFAGST). Over 389–404 (ALSRSGVQESTGGKTQ) the chain is Extracellular. Residues 405-425 (VAGLLSAVIVLIVIVAIGFLL) form a helical membrane-spanning segment. Residues 426 to 462 (QPLQKSVLAALALGNLKGMLMQFAEIGRLWKKDKYDC) are Cytoplasmic-facing. A helical transmembrane segment spans residues 463-483 (LIWIMTFIFAIVLGLGLGLAA). Residues 484–757 (SVAFQLLTIV…ECQVPVETKF (274 aa)) are Extracellular-facing. Positions 518–713 (NYADVYEPEG…LTIHDAILHI (196 aa)) constitute an STAS domain. Positions 754–757 (ETKF) match the PDZ-binding motif.

The protein belongs to the SLC26A/SulP transporter (TC 2.A.53) family. In terms of assembly, interacts with PDZK1, CFTR, SLC26A6 and NHERF1. Interacts (via PDZ-binding motif) with NHERF4 (via the third PDZ domain); interaction leads to decreased expression of SLC26A3 on the cell membrane resulting in its reduced exchanger activity. In terms of processing, N-glycosylation is required for efficient cell surface expression, and protection from proteolytic degradation.

The protein localises to the apical cell membrane. It is found in the membrane. It localises to the cell membrane. The catalysed reaction is hydrogencarbonate(in) + 2 chloride(out) = hydrogencarbonate(out) + 2 chloride(in). Mediates chloride-bicarbonate exchange with a chloride bicarbonate stoichiometry of 2:1 in the intestinal epithelia. Plays a role in the chloride and bicarbonate homeostasis during sperm epididymal maturation and capacitation. This chain is Chloride anion exchanger (Slc26a3), found in Rattus norvegicus (Rat).